A 417-amino-acid chain; its full sequence is Serine hydroxymethyltransferase (417 aa).

Residues Leu-121 and 125–127 (GHL) contribute to the (6S)-5,6,7,8-tetrahydrofolate site. Residue Lys-229 is modified to N6-(pyridoxal phosphate)lysine. 355 to 357 (SPF) serves as a coordination point for (6S)-5,6,7,8-tetrahydrofolate.

This sequence belongs to the SHMT family. Homodimer. Requires pyridoxal 5'-phosphate as cofactor.

It localises to the cytoplasm. The catalysed reaction is (6R)-5,10-methylene-5,6,7,8-tetrahydrofolate + glycine + H2O = (6S)-5,6,7,8-tetrahydrofolate + L-serine. The protein operates within one-carbon metabolism; tetrahydrofolate interconversion. Its pathway is amino-acid biosynthesis; glycine biosynthesis; glycine from L-serine: step 1/1. Its function is as follows. Catalyzes the reversible interconversion of serine and glycine with tetrahydrofolate (THF) serving as the one-carbon carrier. This reaction serves as the major source of one-carbon groups required for the biosynthesis of purines, thymidylate, methionine, and other important biomolecules. Also exhibits THF-independent aldolase activity toward beta-hydroxyamino acids, producing glycine and aldehydes, via a retro-aldol mechanism. In Serratia proteamaculans (strain 568), this protein is Serine hydroxymethyltransferase.